The sequence spans 621 residues: uncharacterized protein (621 aa).

The N-terminal stretch at 1-15 (MRRSVCYVTPSVARA) is a signal peptide.

The protein belongs to the chlamydial CPn_0512/CT_425/TC_0708 family.

This is an uncharacterized protein from Chlamydia trachomatis serovar D (strain ATCC VR-885 / DSM 19411 / UW-3/Cx).